Reading from the N-terminus, the 1123-residue chain is Proline-, glutamic acid- and leucine-rich protein 1 (1123 aa).

A2 bears the N-acetylalanine mark. The segment at 2 to 80 is required for modulation of ESR1 transcriptional activity; it reads AAAVLSGASA…CLLRLHGTAG (79 aa). S13 is modified (phosphoserine). Short sequence motifs (LXXLL motif) lie at residues 33–37, 69–73, 111–115, 155–159, 177–181, 264–268, 271–275, 365–369, and 460–464; these read LRLLL, LMCLL, LLSLL, LRDLL, LPGLL, LHSLL, and LTHLL. Positions 121-189 are required for modulation of ESR1 transcriptional activity; it reads TELFQQHCVS…LLTSLLGLRP (69 aa). Phosphoserine occurs at positions 478 and 482. Short sequence motifs (LXXLL motif) lie at residues 580–584 and 585–589; these read LYRLL and LALLL. Disordered stretches follow at residues 639 to 767 and 779 to 1123; these read LQSS…GRVP and ASDV…EPDS. Over residues 646–657 the composition is skewed to pro residues; it reads CPTPAPVPPPEA. Residue T751 is modified to Phosphothreonine. A Phosphoserine modification is found at S755. A compositionally biased stretch (acidic residues) spans 780-792; it reads SDVEISLESDSDD. Composition is skewed to pro residues over residues 803 to 829 and 840 to 865; these read SLPP…PPVP and TPGP…PPQL. The span at 891–962 shows a compositional bias: acidic residues; that stretch reads SDEEEEEEEE…EELDEVEDVE (72 aa). Over residues 973-987 the composition is skewed to pro residues; it reads GPPPPTLPPALPPSD. A phosphoserine mark is found at S1029 and S1039.

Belongs to the RIX1/PELP1 family. As to quaternary structure, interacts with HRS, RXRA, SUMO2, HDAC2, RB1 and STAT3. Interacts with PI3K, SRC and EGFR in cytoplasm. Interacts with ESR1, the interaction is enhanced by 17-beta-estradiol; the interaction increases ESR1 transcriptional activity. Interacts with CREBBP and EP300 in a ligand-dependent manner. Forms two complexes in the presence of 17-beta-estradiol; one with SRC and ESR1 and another with LCK and ESR1. Interacts with histone H1 and H3 with a greater affinity for H1. Component of some MLL1/MLL complex, at least composed of the core components KMT2A/MLL1, ASH2L, HCFC1/HCF1, WDR5 and RBBP5, as well as the facultative components BACC1, CHD8, E2F6, HSP70, INO80C, KANSL1, LAS1L, MAX, MCRS1, MGA, KAT8/MOF, PELP1, PHF20, PRP31, RING2, RUVB1/TIP49A, RUVB2/TIP49B, SENP3, TAF1, TAF4, TAF6, TAF7, TAF9 and TEX10. Core component of the 5FMC complex, at least composed of PELP1, LAS1L, TEX10, WDR18 and SENP3; the complex interacts with methylated CHTOP and ZNF148. Interacts with NOL9. Interacts with BCAS3. Component of the PELP1 complex, composed of at least PELP1, TEX10 and WDR18. The complex interacts (via PELP1) with MDN1 (via its hexameric AAA ATPase ring) and the pre-60S ribosome particles. In terms of processing, transiently sumoylated, preferentially conjugated to SUMO2 or SUMO3. Sumoylation causes nucleolar exclusion of PELP1 and promotes the recruitment of MDN1 to pre-60S particles. Desumoylation by SUMO isopeptidase SENP3 is needed to release both PELP1 and MDN1 from pre-ribosomes. Widely expressed with high levels in testis, ovary, uterus and pituitary gland.

It localises to the nucleus. The protein resides in the nucleolus. Its subcellular location is the nucleoplasm. The protein localises to the cytoplasm. Coactivator of estrogen receptor-mediated transcription and a corepressor of other nuclear hormone receptors and sequence-specific transcription factors. Plays a role in estrogen receptor (ER) genomic activity when present in the nuclear compartment by activating the ER target genes in a hormonal stimulation dependent manner. Can facilitate ER non-genomic signaling via SRC and PI3K interaction in the cytosol. Plays a role in E2-mediated cell cycle progression by interacting with RB1. May have important functional implications in ER/growth factor cross-talk. Interacts with several growth factor signaling components including EGFR and HRS. Functions as the key stabilizing component of the Five Friends of Methylated CHTOP (5FMC) complex; the 5FMC complex is recruited to ZNF148 by methylated CHTOP, leading to desumoylation of ZNF148 and subsequent transactivation of ZNF148 target genes. Component of the PELP1 complex involved in the nucleolar steps of 28S rRNA maturation and the subsequent nucleoplasmic transit of the pre-60S ribosomal subunit. Regulates pre-60S association of the critical remodeling factor MDN1. This is Proline-, glutamic acid- and leucine-rich protein 1 (Pelp1) from Mus musculus (Mouse).